Consider the following 294-residue polypeptide: Mitochondrial glycine transporter (294 aa).

Solcar repeat units lie at residues 5–84 (RRAT…IRQA), 102–186 (LNMY…MKVL), and 208–292 (ASTL…IVKK). 6 consecutive transmembrane segments (helical) span residues 11–36 (LIGG…TRLQ), 59–85 (GALP…RQAI), 108–133 (MFSG…VRYE), 161–184 (GFGA…DRMK), 212–238 (INGS…KTRM), and 267–285 (GISL…AWGI).

This sequence belongs to the mitochondrial carrier (TC 2.A.29) family. SLC25A38 subfamily.

It localises to the mitochondrion inner membrane. It carries out the reaction glycine(in) = glycine(out). Mitochondrial glycine transporter that imports glycine into the mitochondrial matrix. Plays an important role in providing glycine for the first enzymatic step in heme biosynthesis, the condensation of glycine with succinyl-CoA to produce 5-aminolevulinate (ALA) in the mitochondrial matrix. This chain is Mitochondrial glycine transporter, found in Kluyveromyces lactis (strain ATCC 8585 / CBS 2359 / DSM 70799 / NBRC 1267 / NRRL Y-1140 / WM37) (Yeast).